Here is a 722-residue protein sequence, read N- to C-terminus: Neprilysin-1 (722 aa).

A signal peptide spans 1 to 17; sequence MAVALLVALCVVSSRMA. Residues 32 to 722 form the Peptidase M13 domain; sequence VCNSPVCQKA…MNPTHKCLLW (691 aa). Cystine bridges form between C33–C38, C56–C707, C64–C667, C120–C378, and C589–C719. N100, N184, N207, and N424 each carry an N-linked (GlcNAc...) asparagine glycan. H552 is a Zn(2+) binding site. Residue E553 is part of the active site. H556 is a Zn(2+) binding site. Residue N609 is glycosylated (N-linked (GlcNAc...) asparagine). E614 provides a ligand contact to Zn(2+). The active-site Proton donor is the D618.

This sequence belongs to the peptidase M13 family. It depends on Zn(2+) as a cofactor. Post-translationally, contains 5 disulfide bonds. Expressed by the venom gland.

It localises to the secreted. The polypeptide is Neprilysin-1 (Trittame loki (Brush-footed trapdoor spider)).